The chain runs to 265 residues: Cytochrome c oxidase subunit 3 (265 aa).

The next 6 helical transmembrane spans lie at Gly41–Trp61, Gly85–Phe105, Thr137–Gly157, Ala162–Met182, Phe200–Val220, and Trp245–Ile265.

It belongs to the cytochrome c oxidase subunit 3 family. As to quaternary structure, component of the cytochrome c oxidase (complex IV, CIV), a multisubunit enzyme composed of a catalytic core of 3 subunits and several supernumerary subunits. The complex exists as a monomer or a dimer and forms supercomplexes (SCs) in the inner mitochondrial membrane with ubiquinol-cytochrome c oxidoreductase (cytochrome b-c1 complex, complex III, CIII).

It localises to the mitochondrion inner membrane. The enzyme catalyses 4 Fe(II)-[cytochrome c] + O2 + 8 H(+)(in) = 4 Fe(III)-[cytochrome c] + 2 H2O + 4 H(+)(out). Functionally, component of the cytochrome c oxidase, the last enzyme in the mitochondrial electron transport chain which drives oxidative phosphorylation. The respiratory chain contains 3 multisubunit complexes succinate dehydrogenase (complex II, CII), ubiquinol-cytochrome c oxidoreductase (cytochrome b-c1 complex, complex III, CIII) and cytochrome c oxidase (complex IV, CIV), that cooperate to transfer electrons derived from NADH and succinate to molecular oxygen, creating an electrochemical gradient over the inner membrane that drives transmembrane transport and the ATP synthase. Cytochrome c oxidase is the component of the respiratory chain that catalyzes the reduction of oxygen to water. Electrons originating from reduced cytochrome c in the intermembrane space (IMS) are transferred via the dinuclear copper A center (CU(A)) of subunit 2 and heme A of subunit 1 to the active site in subunit 1, a binuclear center (BNC) formed by heme A3 and copper B (CU(B)). The BNC reduces molecular oxygen to 2 water molecules using 4 electrons from cytochrome c in the IMS and 4 protons from the mitochondrial matrix. The protein is Cytochrome c oxidase subunit 3 (COX3) of Triticum aestivum (Wheat).